A 183-amino-acid polypeptide reads, in one-letter code: ATP synthase subunit b, chloroplastic (183 aa).

The helical transmembrane segment at 27-49 (LATNLINLTVVVGVLIFFGKGVL) threads the bilayer.

Belongs to the ATPase B chain family. In terms of assembly, F-type ATPases have 2 components, F(1) - the catalytic core - and F(0) - the membrane proton channel. F(1) has five subunits: alpha(3), beta(3), gamma(1), delta(1), epsilon(1). F(0) has four main subunits: a(1), b(1), b'(1) and c(10-14). The alpha and beta chains form an alternating ring which encloses part of the gamma chain. F(1) is attached to F(0) by a central stalk formed by the gamma and epsilon chains, while a peripheral stalk is formed by the delta, b and b' chains.

The protein localises to the plastid. It is found in the chloroplast thylakoid membrane. F(1)F(0) ATP synthase produces ATP from ADP in the presence of a proton or sodium gradient. F-type ATPases consist of two structural domains, F(1) containing the extramembraneous catalytic core and F(0) containing the membrane proton channel, linked together by a central stalk and a peripheral stalk. During catalysis, ATP synthesis in the catalytic domain of F(1) is coupled via a rotary mechanism of the central stalk subunits to proton translocation. Functionally, component of the F(0) channel, it forms part of the peripheral stalk, linking F(1) to F(0). The protein is ATP synthase subunit b, chloroplastic of Hordeum vulgare (Barley).